The chain runs to 423 residues: Histidine--tRNA ligase (423 aa).

It belongs to the class-II aminoacyl-tRNA synthetase family. As to quaternary structure, homodimer.

The protein resides in the cytoplasm. It catalyses the reaction tRNA(His) + L-histidine + ATP = L-histidyl-tRNA(His) + AMP + diphosphate + H(+). The sequence is that of Histidine--tRNA ligase from Rhodococcus opacus (strain B4).